The sequence spans 475 residues: Adenosylhomocysteinase (475 aa).

The substrate site is built by Thr63, Asp138, and Glu199. 200–202 (TTT) is a binding site for NAD(+). Substrate is bound by residues Lys229 and Asp233. Residues Asn234, 263-268 (GYGDVG), Glu286, Asn321, 342-344 (IGH), and Asn389 each bind NAD(+).

Belongs to the adenosylhomocysteinase family. NAD(+) is required as a cofactor.

It is found in the cytoplasm. The catalysed reaction is S-adenosyl-L-homocysteine + H2O = L-homocysteine + adenosine. It participates in amino-acid biosynthesis; L-homocysteine biosynthesis; L-homocysteine from S-adenosyl-L-homocysteine: step 1/1. Its function is as follows. May play a key role in the regulation of the intracellular concentration of adenosylhomocysteine. The chain is Adenosylhomocysteinase from Solibacter usitatus (strain Ellin6076).